Reading from the N-terminus, the 549-residue chain is MLSKRSLRVLKWGRCEAAYAAAYPKVPDWVLNFSPLPSLSSPHRDFSAFPAAQSEHMQQKMSENGAIPRQGKVLTVDTMNANVKKVDYAVRGPIVQRAVQIEKELKEGVKKPFDEVIKANIGDAHAMGQRPITFFRQVMALCTYPQLLDDNKFPEDAKNRARRILQSCGGNSIGAYTTSQGIDCVRQDVAKYIERRDGGIPSDPDNIYLTTGASDGIVTILKLLTAGEGLTRTGVMISIPQYPLYSASIAELGAVQINYYLNEEKCWSLDISELQRSLQAARKHCNPRVLCIINPGNPTGQVQSRQCIEDVIQFAAKENLFLMADEVYQDNVYAKGCEFHSFKKVLFEMGPEYSKKVELASFHSTSKCYMGECGFRGGYMEVINMDADVKAQLTKLVSVRLCPPAPGQALMDLVVNPPQPGEPSHQTFMQERTAVLSALAEKAKLTEQILNTVPGISCNPVQGAMYSFPRITLPERAISEAKAKGQAPDMFYCMKLLEETGICLVPGSGFGQREGTYHFRMTILPPTDKLKLMLNKLKDFHQRFTQQYS.

Position 367 is an N6-(pyridoxal phosphate)lysine (lysine 367).

This sequence belongs to the class-I pyridoxal-phosphate-dependent aminotransferase family. Alanine aminotransferase subfamily. As to quaternary structure, homodimer. Pyridoxal 5'-phosphate is required as a cofactor.

It carries out the reaction L-alanine + 2-oxoglutarate = pyruvate + L-glutamate. It participates in amino-acid degradation; L-alanine degradation via transaminase pathway; pyruvate from L-alanine: step 1/1. In terms of biological role, catalyzes the reversible transamination between alanine and 2-oxoglutarate to form pyruvate and glutamate. This is Alanine aminotransferase 2-like (gpt2l) from Danio rerio (Zebrafish).